The sequence spans 493 residues: Probable cytosol aminopeptidase (493 aa).

Mn(2+)-binding residues include Lys-260 and Asp-265. The active site involves Lys-272. Residues Asp-283, Asp-342, and Glu-344 each contribute to the Mn(2+) site. Arg-346 is an active-site residue.

Belongs to the peptidase M17 family. The cofactor is Mn(2+).

It localises to the cytoplasm. It catalyses the reaction Release of an N-terminal amino acid, Xaa-|-Yaa-, in which Xaa is preferably Leu, but may be other amino acids including Pro although not Arg or Lys, and Yaa may be Pro. Amino acid amides and methyl esters are also readily hydrolyzed, but rates on arylamides are exceedingly low.. The catalysed reaction is Release of an N-terminal amino acid, preferentially leucine, but not glutamic or aspartic acids.. In terms of biological role, presumably involved in the processing and regular turnover of intracellular proteins. Catalyzes the removal of unsubstituted N-terminal amino acids from various peptides. This chain is Probable cytosol aminopeptidase, found in Clostridium perfringens (strain 13 / Type A).